The chain runs to 270 residues: Plasmanylethanolamine desaturase 1 (270 aa).

3 helical membrane-spanning segments follow: residues 47 to 67 (WCSV…LLLL), 74 to 94 (PLVI…SGLV), and 161 to 181 (ALEQ…FGTF). Residues 186–190 (HKWSH) carry the Histidine box-1 motif. Residues 213–217 (HHRIH) carry the Histidine box-2 motif.

This sequence belongs to the fatty acid desaturase CarF family.

It is found in the endoplasmic reticulum membrane. It carries out the reaction a 1-(1,2-saturated alkyl)-2-acyl-sn-glycero-3-phosphoethanolamine + 2 Fe(II)-[cytochrome b5] + O2 + 2 H(+) = a 1-O-(1Z-alkenyl)-2-acyl-sn-glycero-3-phosphoethanolamine + 2 Fe(III)-[cytochrome b5] + 2 H2O. It catalyses the reaction a 1-O-hexadecyl-2-acyl-sn-glycero-3-phosphoethanolamine + 2 Fe(II)-[cytochrome b5] + O2 + 2 H(+) = a 1-O-(1Z-hexadecenyl)-2-acyl-sn-glycero-3-phosphoethanolamine + 2 Fe(III)-[cytochrome b5] + 2 H2O. The enzyme catalyses a 1-O-octadecyl-2-acyl-sn-glycero-3-phosphoethanolamine + 2 Fe(II)-[cytochrome b5] + O2 + 2 H(+) = a 1-O-(1Z-octadecenyl)-2-acyl-sn-glycero-3-phosphoethanolamine + 2 Fe(III)-[cytochrome b5] + 2 H2O. The catalysed reaction is a 1-O-(9Z-octadecenyl)-2-acyl-sn-glycero-3-phosphoethanolamine + 2 Fe(II)-[cytochrome b5] + O2 + 2 H(+) = a 1-O-(1Z,9Z-octadecadienyl)-2-acyl-sn-glycero-3-phosphoethanolamine + 2 Fe(III)-[cytochrome b5] + 2 H2O. The protein operates within lipid metabolism; fatty acid metabolism. In terms of biological role, plasmanylethanolamine desaturase involved in plasmalogen biogenesis in the endoplasmic reticulum membrane. Plasmalogens are glycerophospholipids with a hydrocarbon chain linked by a vinyl ether bond at the glycerol sn-1 position, and are involved in antioxidative and signaling mechanisms. This chain is Plasmanylethanolamine desaturase 1, found in Homo sapiens (Human).